Consider the following 105-residue polypeptide: Nitrogenase-stabilizing/protective protein NifW (105 aa).

The protein belongs to the NifW family. As to quaternary structure, homotrimer; associates with NifD.

In terms of biological role, may protect the nitrogenase Fe-Mo protein from oxidative damage. The polypeptide is Nitrogenase-stabilizing/protective protein NifW (Nostoc punctiforme (strain ATCC 29133 / PCC 73102)).